A 202-amino-acid chain; its full sequence is HTH-type transcriptional regulator BetI 1 (202 aa).

Positions 8–68 (PIRRRQLIQA…SAMRQILWDL (61 aa)) constitute an HTH tetR-type domain. The segment at residues 31–50 (TIARIAKRAGVSAGIISHYF) is a DNA-binding region (H-T-H motif).

It participates in amine and polyamine biosynthesis; betaine biosynthesis via choline pathway [regulation]. In terms of biological role, repressor involved in the biosynthesis of the osmoprotectant glycine betaine. It represses transcription of the choline transporter BetT and the genes of BetAB involved in the synthesis of glycine betaine. This Chromohalobacter salexigens (strain ATCC BAA-138 / DSM 3043 / CIP 106854 / NCIMB 13768 / 1H11) protein is HTH-type transcriptional regulator BetI 1.